A 265-amino-acid polypeptide reads, in one-letter code: Synaptoporin (265 aa).

The Cytoplasmic segment spans residues 1–4; that stretch reads MCMV. In terms of domain architecture, MARVEL spans 1-202; sequence MCMVIFAPLF…NIWFVFKETG (202 aa). The helical transmembrane segment at 5 to 25 threads the bilayer; that stretch reads IFAPLFAIFAFATCGGYSGGL. Residues 26 to 81 lie on the Vesicular side of the membrane; it reads RLSVDCVNKTESNLSIDIAFAYPFRLHQVTFEVPTCEGKERQKLALIGDSSSSAEF. Asn33 and Asn38 each carry an N-linked (GlcNAc...) asparagine glycan. Residues 82–102 traverse the membrane as a helical segment; sequence FVTVAVFAFLYSLAATVVYIF. The Cytoplasmic segment spans residues 103–114; it reads FQNKYRENNRGP. Residues 115-135 traverse the membrane as a helical segment; the sequence is LIDFIVTVVFSFLWLVGSSAW. Topologically, residues 136-177 are vesicular; that stretch reads AKGLSDVKVATDPKEVLLLMSACKQPSNKCMAIHSPVMSSLN. Residues 178 to 198 form a helical membrane-spanning segment; it reads TSVVFGFLNFILWAGNIWFVF. The Cytoplasmic portion of the chain corresponds to 199 to 265; sequence KETGWHSSGQ…TGPTSFTNQI (67 aa). Tandem repeats lie at residues 210 to 214, 222 to 226, 227 to 231, 232 to 236, and 238 to 242. The segment at 210-242 is 5 X approximate repeats; it reads YLSDPMEKHSSSYNQGGYNQDSYGSSSGYSQQA. Phosphoserine is present on Ser212. The disordered stretch occupies residues 221–265; it reads SYNQGGYNQDSYGSSSGYSQQASLGPTSDEFGQQPTGPTSFTNQI. Low complexity predominate over residues 224-243; the sequence is QGGYNQDSYGSSSGYSQQAS. Positions 244-265 are enriched in polar residues; it reads LGPTSDEFGQQPTGPTSFTNQI.

This sequence belongs to the synaptophysin/synaptobrevin family.

It is found in the cytoplasmic vesicle. It localises to the secretory vesicle. The protein resides in the synaptic vesicle membrane. Its subcellular location is the synapse. The protein localises to the synaptosome. Intrinsic membrane protein of small synaptic vesicles. Probable vesicular channel protein. In Homo sapiens (Human), this protein is Synaptoporin (SYNPR).